Here is a 367-residue protein sequence, read N- to C-terminus: MESLFPAPYWEVLYGSHFQGNLSLLNETVPHHLLLNASHSAFLPLGLKVTIVGLYLAVCIGGLLGNCLVMYVILRHTKMKTATNIYIFNLALADTLVLLTLPFQGTDILLGFWPFGNALCKTVIAIDYYNMFTSTFTLTAMSVDRYVAICHPIRALDVRTSSKAQAVNVAIWALASVVGVPVAIMGSAQVEDEEIECLVEIPAPQDYWGPVFAICIFLFSFIIPVLIISVCYSLMIRRLRGVRLLSGSREKDRNLRRITRLVLVVVAVFVGCWTPVQVFVLVQGLGVQPGSETAVAILRFCTALGYVNSCLNPILYAFLDENFKACFRKFCCASSLHREMQVSDRVRSIAKDVGLGCKTSETVPRPA.

Over M1–L45 the chain is Extracellular. N-linked (GlcNAc...) asparagine glycosylation is found at N21, N26, and N36. Residues G46 to Y71 form a helical membrane-spanning segment. The Cytoplasmic segment spans residues V72 to N84. Residues I85–T106 traverse the membrane as a helical segment. Residues D107–K121 lie on the Extracellular side of the membrane. A disulfide bond links C120 and C197. Residues T122–V143 form a helical membrane-spanning segment. Over D144–S162 the chain is Cytoplasmic. A helical membrane pass occupies residues K163–M185. The Extracellular segment spans residues G186–W208. A helical membrane pass occupies residues G209–S233. Residues L234–L261 lie on the Cytoplasmic side of the membrane. The chain crosses the membrane as a helical span at residues V262–V282. Over Q283–I297 the chain is Extracellular. A helical membrane pass occupies residues L298–L319. Residues D320–A367 lie on the Cytoplasmic side of the membrane. C331 carries the S-palmitoyl cysteine lipid modification.

The protein belongs to the G-protein coupled receptor 1 family. Phosphorylation at Ser-360 requires GRK3. In terms of tissue distribution, highly expressed in several brain areas, the intestine, liver and spleen. Detected in sympathetic stellate ganglion neurons.

Its subcellular location is the cell membrane. The protein localises to the cytoplasmic vesicle. G-protein coupled opioid receptor that functions as a receptor for the endogenous neuropeptide nociceptin. Ligand binding causes a conformation change that triggers signaling via guanine nucleotide-binding proteins (G proteins) and modulates the activity of down-stream effectors. Signaling via G proteins mediates inhibition of adenylate cyclase activity and calcium channel activity. Arrestins modulate signaling via G proteins and mediate the activation of alternative signaling pathways that lead to the activation of MAP kinases. Plays a role in modulating nociception and the perception of pain. Plays a role in the regulation of locomotor activity by the neuropeptide nociceptin. In Rattus norvegicus (Rat), this protein is Nociceptin receptor (Oprl1).